The sequence spans 89 residues: Large ribosomal subunit protein eL34 (89 aa).

Belongs to the eukaryotic ribosomal protein eL34 family.

The chain is Large ribosomal subunit protein eL34 (rpl34e) from Methanocaldococcus jannaschii (strain ATCC 43067 / DSM 2661 / JAL-1 / JCM 10045 / NBRC 100440) (Methanococcus jannaschii).